The sequence spans 223 residues: Lipoprotein signal peptidase (223 aa).

Residues 1–20 are disordered; it reads MNSAKVNPSGHAPTPAPTAS. Helical transmembrane passes span 32 to 52, 65 to 85, 91 to 111, and 116 to 136; these read LFFG…EAIF, WIIE…VFGL, LVFA…LFFF, and SCWL…NLYD. Active-site residues include D156 and D175. The chain crosses the membrane as a helical span at residues 173–193; sequence IADSLLVTGAIMLLVQSFFFP. Positions 196 to 223 are disordered; sequence PHGEADGNELPGRRAPDEPTEGTKPAAS.

The protein belongs to the peptidase A8 family.

The protein localises to the cell inner membrane. It catalyses the reaction Release of signal peptides from bacterial membrane prolipoproteins. Hydrolyzes -Xaa-Yaa-Zaa-|-(S,diacylglyceryl)Cys-, in which Xaa is hydrophobic (preferably Leu), and Yaa (Ala or Ser) and Zaa (Gly or Ala) have small, neutral side chains.. It participates in protein modification; lipoprotein biosynthesis (signal peptide cleavage). Its function is as follows. This protein specifically catalyzes the removal of signal peptides from prolipoproteins. The sequence is that of Lipoprotein signal peptidase from Rhodopirellula baltica (strain DSM 10527 / NCIMB 13988 / SH1).